Reading from the N-terminus, the 907-residue chain is Epidermal growth factor receptor substrate 15-like 1 (907 aa).

The residue at position 2 (A2) is an N-acetylalanine. The EH 1 domain occupies 15 to 104 (GNPLYESYYK…SLTMPPPKFH (90 aa)). Positions 15–368 (GNPLYESYYK…PSERGTPIPD (354 aa)) are interaction with DAB2. The EF-hand 1 domain occupies 48–83 (LSDIILGKIWDLADPEGKGFLDKQGFYVALRLVACA). Phosphotyrosine is present on Y74. Phosphoserine occurs at positions 107 and 108. Residues 127-215 (EKAKFDGIFE…PPLIPPSKRK (89 aa)) form the EH 2 domain. Residues 159–194 (LPLDVLGRVWDLSDIDKDGHLDRDEFAVAMHLVYRA) form the EF-hand 2 domain. Residues D172, D174, D176, H178, and E183 each contribute to the Ca(2+) site. S229, S244, S253, S255, and S259 each carry phosphoserine. The disordered stretch occupies residues 229 to 260 (SPPPKDSLRSTPSHGSVSSLNSTGSLSPKHSV). Residues 241–255 (SHGSVSSLNSTGSLS) are compositionally biased toward low complexity. 2 EF-hand domains span residues 272–307 (ADKMRFDEIFLKTDLDLDGYVSGQEVKEIFMHSGLT) and 308–341 (QNLLAHIWALADTRQTGKLSKEQFALAMYFIQQK). An EH 3 domain is found at 273–363 (DKMRFDEIFL…PDMVPPSERG (91 aa)). The residue at position 360 (S360) is a Phosphoserine. Phosphothreonine is present on T364. Residues S369 and S375 each carry the phosphoserine modification. Residues 384–551 (LDDISQEIAQ…RSKLSQLQES (168 aa)) are a coiled coil. Phosphoserine is present on S558. At Y562 the chain carries Phosphotyrosine. Residue S610 is modified to Phosphoserine. Residues 611 to 860 (QELHPDPFQA…SSSGFADFTS (250 aa)) form a disordered region. Basic and acidic residues predominate over residues 622-636 (DPFKSDPFKGADPFK). The segment covering 643-652 (DPFSEQQTAA) has biased composition (polar residues). Phosphoserine is present on residues S664, S670, S695, S715, and S732. Over residues 682–696 (NDPFTSDPFTKNPSL) the composition is skewed to polar residues. Residues 703-743 (FESSDPFSSSSISSKGSDPFGTLDPFGSSSFSSAEGFADFS) show a composition bias toward low complexity. Pro residues predominate over residues 776-790 (ALPPKKPAPPRPKPP). Position 791 is a phosphoserine (S791). Residues 791–802 (SGQSTPVSQLGS) are compositionally biased toward polar residues. A Phosphothreonine modification is found at T795. The segment covering 840-853 (APSSSAKPPKTSSS) has biased composition (low complexity). 2 UIM domains span residues 863-882 (NEEQQLAWAKRESEKAEQER) and 889-907 (QEQEDLELAIALSKADMPA).

As to quaternary structure, interacts with EPS15, AGFG1/HRB and AGFG2/HRBL. Associates with the clathrin-associated adapter protein complex 2 (AP-2). Interacts with FCHO1. Interacts with FCHO2. Interacts (via EH domains) with DAB2. Interacts with UBQLN1 (via ubiquitin-like domain). Interacts with CAVIN3 (via leucine-zipper domain). Interacts with REPS2. Phosphorylated on tyrosine residues by EGFR.

Its subcellular location is the cell membrane. The protein localises to the nucleus. It is found in the membrane. It localises to the coated pit. Its function is as follows. Seems to be a constitutive component of clathrin-coated pits that is required for receptor-mediated endocytosis. Involved in endocytosis of integrin beta-1 (ITGB1) and transferrin receptor (TFR); internalization of ITGB1 as DAB2-dependent cargo but not TFR seems to require association with DAB2. The protein is Epidermal growth factor receptor substrate 15-like 1 (Eps15l1) of Mus musculus (Mouse).